The sequence spans 103 residues: Cell division protein FtsB (103 aa).

Topologically, residues 1–3 (MGK) are cytoplasmic. Residues 4–21 (LTLLLLALLVWLQYSLWF) traverse the membrane as a helical segment. Residues 22-103 (GKNGIHDYSR…RAGGPAQNNR (82 aa)) are Periplasmic-facing. The stretch at 38 to 62 (VQQATNAKLKARNDQLFAEIDDLNG) forms a coiled coil.

This sequence belongs to the FtsB family. Part of a complex composed of FtsB, FtsL and FtsQ.

It is found in the cell inner membrane. Functionally, essential cell division protein. May link together the upstream cell division proteins, which are predominantly cytoplasmic, with the downstream cell division proteins, which are predominantly periplasmic. The chain is Cell division protein FtsB from Cronobacter sakazakii (strain ATCC BAA-894) (Enterobacter sakazakii).